The chain runs to 133 residues: MADFEGGGDDGGYEEFDEGGGFEEEYVEETETTEAYTDIIDPSADANTAEAGRIPNHLRKTTRYMTKYERARLLGSRALQISMNAPIMVELEGETDPLQIAWKELRAKKIPLIIRRFLPNGMYEDWSVDELSI.

A compositionally biased stretch (acidic residues) spans 1 to 32 (MADFEGGGDDGGYEEFDEGGGFEEEYVEETET). Residues 1–55 (MADFEGGGDDGGYEEFDEGGGFEEEYVEETETTEAYTDIIDPSADANTAEAGRIP) form a disordered region.

This sequence belongs to the archaeal Rpo6/eukaryotic RPB6 RNA polymerase subunit family. As to quaternary structure, component of the RNA polymerase I (Pol I), RNA polymerase II (Pol II) and RNA polymerase III (Pol III) complexes consisting of at least 13, 12 and 17 subunits, respectively.

Its subcellular location is the nucleus. In terms of biological role, DNA-dependent RNA polymerases catalyze the transcription of DNA into RNA using the four ribonucleoside triphosphates as substrates. Common component of RNA polymerases I, II and III which synthesize ribosomal RNA precursors, mRNA precursors and many functional non-coding RNAs, and small RNAs, such as 5S rRNA and tRNAs, respectively. Pol II is the central component of the basal RNA polymerase II transcription machinery. Pols are composed of mobile elements that move relative to each other. In Pol II, RPB6 is part of the clamp element and together with parts of RPB1 and RPB2 forms a pocket to which the RPB4-RPB7 subcomplex binds. This chain is DNA-directed RNA polymerases I, II, and III subunit rpabc2 (polr2f), found in Dictyostelium discoideum (Social amoeba).